The primary structure comprises 109 residues: Nucleoid-associated protein VC_1055 (109 aa).

The segment at 1–22 (MFGKGGMGNLMKQAQQMQERMQ) is disordered.

This sequence belongs to the YbaB/EbfC family. Homodimer.

Its subcellular location is the cytoplasm. The protein resides in the nucleoid. Binds to DNA and alters its conformation. May be involved in regulation of gene expression, nucleoid organization and DNA protection. The protein is Nucleoid-associated protein VC_1055 of Vibrio cholerae serotype O1 (strain ATCC 39315 / El Tor Inaba N16961).